A 375-amino-acid polypeptide reads, in one-letter code: MSTAGKVIKCKAAVLWQLNKPFSIEEVEVAPPKAHEVRIKMVATGICRSDDHAVTGSIAVPLPVILGHEAAGIVESIGEGVTTVKPGDKVIPLFTPQCGKCRICKHPESNFCLINDLGKPKGMLLDGTSRFTCKGKPIHHFIGTSTFSQYTVVDEIAVAKIDAAAPLEKVCLIGCGFSTGYGSAVKVAKVTPGSTCAVFGLGGVGLSVIMGCKAAGASRIIAVDINKDKFPKAKEVGATECINPQDYKKPIQEVIQEISDGGVDFSFEVIGRLDTVVAALLSCHGACGTSVIVGVPPDSQSLTVNPMLLLSGRTWKGAIFGGFKSKDSVPKLVADFMAKKFSLDPLITNVLPFEKINEGFDLLRSGKSIRTILTF.

An N-acetylserine modification is found at Ser2. 7 residues coordinate Zn(2+): Cys47, His68, Cys98, Cys101, Cys104, Cys112, and Cys175. NAD(+) is bound by residues 200–205 (GLGGVG), Asp224, and Lys229. Lys234 bears the N6-succinyllysine mark. Residue 293 to 295 (VGV) participates in NAD(+) binding. The residue at position 340 (Lys340) is an N6-succinyllysine. Arg370 contacts NAD(+).

The protein belongs to the zinc-containing alcohol dehydrogenase family. Homodimer. Requires Zn(2+) as cofactor.

The protein localises to the cytoplasm. It catalyses the reaction a primary alcohol + NAD(+) = an aldehyde + NADH + H(+). The catalysed reaction is a secondary alcohol + NAD(+) = a ketone + NADH + H(+). The polypeptide is Alcohol dehydrogenase 1 (ADH1) (Oryctolagus cuniculus (Rabbit)).